A 60-amino-acid polypeptide reads, in one-letter code: UPF0434 protein YcaR (60 aa).

Belongs to the UPF0434 family.

This chain is UPF0434 protein YcaR, found in Escherichia coli O139:H28 (strain E24377A / ETEC).